Here is a 200-residue protein sequence, read N- to C-terminus: Small ribosomal subunit protein eS1 (200 aa).

This sequence belongs to the eukaryotic ribosomal protein eS1 family.

The polypeptide is Small ribosomal subunit protein eS1 (Thermococcus onnurineus (strain NA1)).